The following is a 351-amino-acid chain: High-affinity nickel transport protein (351 aa).

Over 1–19 the chain is Cytoplasmic; the sequence is MFQLLAGVRMNSTGRPRAK. Residues 20–40 form a helical membrane-spanning segment; it reads IILLYALLIAFNIGAWLCALA. The Periplasmic segment spans residues 41–51; it reads AFRDHPVLLGT. A helical membrane pass occupies residues 52-72; the sequence is ALLAYGLGLRHAVDADHLAAI. The Cytoplasmic segment spans residues 73–94; sequence DNVTRKLMQDGRRPITAGLWFS. A helical membrane pass occupies residues 95–115; that stretch reads LGHSSVVVLASVLIAVMATTL. Residues 116-128 lie on the Periplasmic side of the membrane; it reads QERLDAFHEVGSV. Residues 129 to 149 traverse the membrane as a helical segment; it reads IGTLASALFLFAIAAINLVIL. Residues 150 to 199 are Cytoplasmic-facing; that stretch reads RSAYRAFRRVRRGGIYVEEDFDLLFGNRGFLARIFRPLFRFITRSWHMYP. A helical transmembrane segment spans residues 200-220; the sequence is LGMLFALGFDTATEVALLGIS. The Periplasmic portion of the chain corresponds to 221–243; sequence TMEASRGVPIWSILVFPALFTAG. Residues 244-264 traverse the membrane as a helical segment; the sequence is MALIDTIDSILMCGAYAWAYA. At 265 to 269 the chain is on the cytoplasmic side; the sequence is KPVRK. A helical membrane pass occupies residues 270 to 290; it reads LYYNMTITFVSAIVALIVGGI. Residues 291-316 are Periplasmic-facing; the sequence is ETLGLLADKFMLKGVFWNAVGALNEN. Residues 317-337 traverse the membrane as a helical segment; that stretch reads FCQLGFVIIGIFTVCWVVSIV. Topologically, residues 338 to 351 are cytoplasmic; the sequence is VYRLRRYDDSEVRA.

Belongs to the NiCoT transporter (TC 2.A.52) family.

It is found in the cell inner membrane. High-affinity nickel transporter responsible for nickel uptake. Necessary for high levels of activity of hydrogenase and urease. Does not transport cobalt. The sequence is that of High-affinity nickel transport protein (hoxN) from Cupriavidus necator (strain ATCC 17699 / DSM 428 / KCTC 22496 / NCIMB 10442 / H16 / Stanier 337) (Ralstonia eutropha).